The sequence spans 414 residues: Serine hydroxymethyltransferase (414 aa).

(6S)-5,6,7,8-tetrahydrofolate is bound by residues Leu121 and Gly125–Leu127. An N6-(pyridoxal phosphate)lysine modification is found at Lys229.

The protein belongs to the SHMT family. Homodimer. Requires pyridoxal 5'-phosphate as cofactor.

The protein resides in the cytoplasm. It carries out the reaction (6R)-5,10-methylene-5,6,7,8-tetrahydrofolate + glycine + H2O = (6S)-5,6,7,8-tetrahydrofolate + L-serine. Its pathway is one-carbon metabolism; tetrahydrofolate interconversion. It functions in the pathway amino-acid biosynthesis; glycine biosynthesis; glycine from L-serine: step 1/1. In terms of biological role, catalyzes the reversible interconversion of serine and glycine with tetrahydrofolate (THF) serving as the one-carbon carrier. This reaction serves as the major source of one-carbon groups required for the biosynthesis of purines, thymidylate, methionine, and other important biomolecules. Also exhibits THF-independent aldolase activity toward beta-hydroxyamino acids, producing glycine and aldehydes, via a retro-aldol mechanism. This Polaromonas naphthalenivorans (strain CJ2) protein is Serine hydroxymethyltransferase.